Reading from the N-terminus, the 621-residue chain is Putative DNA 3'-5' helicase Rad25 (621 aa).

The Helicase ATP-binding domain occupies 268-417; sequence VERFTEQGSG…EIFTLIGPPI (150 aa). ATP is bound at residue 281–288; it reads GPPGSGKT. The DEAH box motif lies at 371–374; the sequence is DEVH. A disordered region spans residues 441-465; sequence PWGDETEQSEYSSTSGHDRRQAAAS. The region spanning 469-621 is the Helicase C-terminal domain; sequence KIDEIRYALA…EAVEPPAKTE (153 aa).

This sequence belongs to the helicase family. RAD25/XPB subfamily.

It catalyses the reaction Couples ATP hydrolysis with the unwinding of duplex DNA by translocating in the 3'-5' direction.. The catalysed reaction is ATP + H2O = ADP + phosphate + H(+). The protein is Putative DNA 3'-5' helicase Rad25 of Haloarcula marismortui (strain ATCC 43049 / DSM 3752 / JCM 8966 / VKM B-1809) (Halobacterium marismortui).